Consider the following 427-residue polypeptide: UDP-N-acetylglucosamine--N-acetylmuramyl-(pentapeptide) pyrophosphoryl-undecaprenol N-acetylglucosamine transferase (427 aa).

Residues 29-31, asparagine 141, arginine 177, serine 205, isoleucine 258, and glutamine 303 each bind UDP-N-acetyl-alpha-D-glucosamine; that span reads TGG. Residues 408 to 427 are disordered; the sequence is SLHPIPDSRFPIRTSAGGAQ.

The protein belongs to the glycosyltransferase 28 family. MurG subfamily.

The protein resides in the cell inner membrane. It carries out the reaction di-trans,octa-cis-undecaprenyl diphospho-N-acetyl-alpha-D-muramoyl-L-alanyl-D-glutamyl-meso-2,6-diaminopimeloyl-D-alanyl-D-alanine + UDP-N-acetyl-alpha-D-glucosamine = di-trans,octa-cis-undecaprenyl diphospho-[N-acetyl-alpha-D-glucosaminyl-(1-&gt;4)]-N-acetyl-alpha-D-muramoyl-L-alanyl-D-glutamyl-meso-2,6-diaminopimeloyl-D-alanyl-D-alanine + UDP + H(+). The protein operates within cell wall biogenesis; peptidoglycan biosynthesis. Its function is as follows. Cell wall formation. Catalyzes the transfer of a GlcNAc subunit on undecaprenyl-pyrophosphoryl-MurNAc-pentapeptide (lipid intermediate I) to form undecaprenyl-pyrophosphoryl-MurNAc-(pentapeptide)GlcNAc (lipid intermediate II). The chain is UDP-N-acetylglucosamine--N-acetylmuramyl-(pentapeptide) pyrophosphoryl-undecaprenol N-acetylglucosamine transferase from Xanthomonas campestris pv. campestris (strain 8004).